The chain runs to 353 residues: D-alanine--D-alanine ligase (353 aa).

Residues 141–349 (KAAFAAAGLP…LEELVSQLVI (209 aa)) enclose the ATP-grasp domain. 176-231 (EAKLKYPCFVKPANLGSSVGISKAQNRNELLIGLDKAASLDRRIVVEQGVSARELE) provides a ligand contact to ATP. Mg(2+) is bound by residues aspartate 302, glutamate 316, and asparagine 318.

Belongs to the D-alanine--D-alanine ligase family. Mg(2+) serves as cofactor. Requires Mn(2+) as cofactor.

The protein resides in the cytoplasm. The enzyme catalyses 2 D-alanine + ATP = D-alanyl-D-alanine + ADP + phosphate + H(+). Its pathway is cell wall biogenesis; peptidoglycan biosynthesis. In terms of biological role, cell wall formation. The chain is D-alanine--D-alanine ligase from Prochlorococcus marinus (strain MIT 9303).